An 83-amino-acid polypeptide reads, in one-letter code: Protein midgut expression 1 (83 aa).

In terms of tissue distribution, endoderm-specific pattern of expression during embryogenesis; anterior and posterior midgut primordia.

In terms of biological role, involved in morphogenesis and development. The sequence is that of Protein midgut expression 1 (mex1) from Drosophila melanogaster (Fruit fly).